The primary structure comprises 132 residues: Translation initiation factor 5A (132 aa).

A Hypusine modification is found at Lys36.

Belongs to the eIF-5A family.

Its subcellular location is the cytoplasm. Its function is as follows. Functions by promoting the formation of the first peptide bond. In Pyrobaculum islandicum (strain DSM 4184 / JCM 9189 / GEO3), this protein is Translation initiation factor 5A (eIF5A).